We begin with the raw amino-acid sequence, 493 residues long: Cysteine--tRNA ligase (493 aa).

Cys41 provides a ligand contact to Zn(2+). The short motif at 43 to 53 (PTVYNYPHIGN) is the 'HIGH' region element. Positions 231, 256, and 260 each coordinate Zn(2+). The 'KMSKS' region signature appears at 296-300 (KMSKS). Lys299 lines the ATP pocket.

The protein belongs to the class-I aminoacyl-tRNA synthetase family. Monomer. It depends on Zn(2+) as a cofactor.

Its subcellular location is the cytoplasm. The enzyme catalyses tRNA(Cys) + L-cysteine + ATP = L-cysteinyl-tRNA(Cys) + AMP + diphosphate. The chain is Cysteine--tRNA ligase from Novosphingobium aromaticivorans (strain ATCC 700278 / DSM 12444 / CCUG 56034 / CIP 105152 / NBRC 16084 / F199).